The following is a 141-amino-acid chain: ATP synthase epsilon chain (141 aa).

It belongs to the ATPase epsilon chain family. In terms of assembly, F-type ATPases have 2 components, CF(1) - the catalytic core - and CF(0) - the membrane proton channel. CF(1) has five subunits: alpha(3), beta(3), gamma(1), delta(1), epsilon(1). CF(0) has three main subunits: a, b and c.

Its subcellular location is the cell inner membrane. Functionally, produces ATP from ADP in the presence of a proton gradient across the membrane. The protein is ATP synthase epsilon chain of Desulfatibacillum aliphaticivorans.